A 737-amino-acid chain; its full sequence is Transcription termination factor Rho (737 aa).

The segment at 1–396 is disordered; the sequence is MSGPCSAHRV…ENSYLPDPTD (396 aa). Low complexity-rich tracts occupy residues 16–28, 62–86, and 101–111; these read RPTI…TRSS, ASRA…GSDA, and DAESAPTAADT. 4 stretches are compositionally biased toward basic and acidic residues: residues 145 to 175, 196 to 256, 266 to 279, and 286 to 324; these read PRAE…HESR, SMER…DRRD, GRPD…DRHQ, and DRSH…DRGG. Basic residues predominate over residues 328 to 339; that stretch reads RNGRRGRNRFRR. Over residues 347–360 the composition is skewed to polar residues; that stretch reads APISGSHAPSQGSP. The Rho RNA-BD domain occupies 367–439; sequence EGTMAGWFDP…IEVQTLNDGS (73 aa). Residues 376–387 are compositionally biased toward basic and acidic residues; that stretch reads PSRDGGFLRRPE. ATP contacts are provided by residues 487-492, 499-504, and R530; these read GYGQRA and RAGKTT.

Belongs to the Rho family. As to quaternary structure, homohexamer. The homohexamer assembles into an open ring structure.

In terms of biological role, facilitates transcription termination by a mechanism that involves Rho binding to the nascent RNA, activation of Rho's RNA-dependent ATPase activity, and release of the mRNA from the DNA template. This Gemmatimonas aurantiaca (strain DSM 14586 / JCM 11422 / NBRC 100505 / T-27) protein is Transcription termination factor Rho.